The sequence spans 414 residues: Glyceraldehyde-3-phosphate dehydrogenase, chloroplastic (414 aa).

The transit peptide at 1–76 directs the protein to the chloroplast; it reads MAFVAPVATV…GIVAATFGPT (76 aa). NADP(+)-binding positions include 88–89, Asp-112, and Arg-156; that span reads RI. Residues 230–232, Thr-261, Arg-276, 289–290, and Arg-312 contribute to the D-glyceraldehyde 3-phosphate site; these read SCT and TG. The active-site Nucleophile is Cys-231. Asn-394 serves as a coordination point for NADP(+).

The protein belongs to the glyceraldehyde-3-phosphate dehydrogenase family. In terms of assembly, homotetramer.

The protein resides in the plastid. The protein localises to the chloroplast. It carries out the reaction D-glyceraldehyde 3-phosphate + phosphate + NADP(+) = (2R)-3-phospho-glyceroyl phosphate + NADPH + H(+). Its pathway is carbohydrate biosynthesis; Calvin cycle. This chain is Glyceraldehyde-3-phosphate dehydrogenase, chloroplastic (GAPA), found in Chondrus crispus (Carrageen Irish moss).